Here is a 284-residue protein sequence, read N- to C-terminus: L-ribulose-5-phosphate 3-epimerase UlaE (284 aa).

This sequence belongs to the L-ribulose-5-phosphate 3-epimerase family.

The catalysed reaction is L-ribulose 5-phosphate = L-xylulose 5-phosphate. It functions in the pathway cofactor degradation; L-ascorbate degradation; D-xylulose 5-phosphate from L-ascorbate: step 3/4. Catalyzes the isomerization of L-xylulose-5-phosphate to L-ribulose-5-phosphate. Is involved in the anaerobic L-ascorbate utilization. This Salmonella heidelberg (strain SL476) protein is L-ribulose-5-phosphate 3-epimerase UlaE.